A 126-amino-acid polypeptide reads, in one-letter code: MANVDELLETFGNMTLLELSDFVKKFEEKFEVTAAAPVAVAAAGGAAAPAEAAEEQDEFDVILEGAGDKKIQVIKVVREIVSGLGLKEAKDLVEGAPKPILEKVAKDAADAAKAKLEEAGAKVSVK.

The protein belongs to the bacterial ribosomal protein bL12 family. In terms of assembly, homodimer. Part of the ribosomal stalk of the 50S ribosomal subunit. Forms a multimeric L10(L12)X complex, where L10 forms an elongated spine to which 2 to 4 L12 dimers bind in a sequential fashion. Binds GTP-bound translation factors.

Forms part of the ribosomal stalk which helps the ribosome interact with GTP-bound translation factors. Is thus essential for accurate translation. In Nocardia farcinica (strain IFM 10152), this protein is Large ribosomal subunit protein bL12.